We begin with the raw amino-acid sequence, 156 residues long: 17.7 kDa class II heat shock protein (156 aa).

In terms of domain architecture, sHSP spans 39 to 156; it reads DAKAMAATPA…KPKTIQVQVA (118 aa).

Belongs to the small heat shock protein (HSP20) family. As to quaternary structure, may form oligomeric structures.

Its subcellular location is the cytoplasm. The sequence is that of 17.7 kDa class II heat shock protein (HSP17.7) from Arabidopsis thaliana (Mouse-ear cress).